The following is a 466-amino-acid chain: UDP-N-acetylmuramate--L-alanine ligase (466 aa).

Residue 114-120 (GTHGKTT) coordinates ATP.

The protein belongs to the MurCDEF family.

It localises to the cytoplasm. It catalyses the reaction UDP-N-acetyl-alpha-D-muramate + L-alanine + ATP = UDP-N-acetyl-alpha-D-muramoyl-L-alanine + ADP + phosphate + H(+). Its pathway is cell wall biogenesis; peptidoglycan biosynthesis. Its function is as follows. Cell wall formation. In Mesorhizobium japonicum (strain LMG 29417 / CECT 9101 / MAFF 303099) (Mesorhizobium loti (strain MAFF 303099)), this protein is UDP-N-acetylmuramate--L-alanine ligase.